A 270-amino-acid chain; its full sequence is Phosphatidylinositol transfer protein alpha isoform (270 aa).

Positions 58, 60, 85, 89, 96, and 194 each coordinate a 1,2-diacyl-sn-glycero-3-phospho-(1D-myo-inositol). The residue at position 215 (K215) is an N6-acetyllysine. Positions 250–263 (TKRQLDEMRQKDPV) are enriched in basic and acidic residues. The interval 250 to 270 (TKRQLDEMRQKDPVKGMTADD) is disordered.

The protein belongs to the PtdIns transfer protein family. PI transfer class I subfamily.

It is found in the cytoplasm. The protein localises to the nucleus. It catalyses the reaction a 1,2-diacyl-sn-glycero-3-phosphocholine(in) = a 1,2-diacyl-sn-glycero-3-phosphocholine(out). The enzyme catalyses a 1,2-diacyl-sn-glycero-3-phospho-(1D-myo-inositol)(in) = a 1,2-diacyl-sn-glycero-3-phospho-(1D-myo-inositol)(out). Its activity is regulated as follows. Phosphatidylinositol transfer activity is inhibited by N-ethylmaleimide. Functionally, catalyzes the transfer of phosphatidylinositol (PI) and phosphatidylcholine (PC) between membranes. Shows a preference for PI and PC containing shorter saturated or monosaturated acyl chains at the sn-1 and sn-2 positions. Preference order for PC is C16:1 &gt; C16:0 &gt; C18:1 &gt; C18:0 &gt; C20:4 and for PI is C16:1 &gt; C16:0 &gt; C18:1 &gt; C18:0 &gt; C20:4 &gt; C20:3. The polypeptide is Phosphatidylinositol transfer protein alpha isoform (PITPNA) (Homo sapiens (Human)).